Consider the following 159-residue polypeptide: SsrA-binding protein (159 aa).

It belongs to the SmpB family.

The protein localises to the cytoplasm. Required for rescue of stalled ribosomes mediated by trans-translation. Binds to transfer-messenger RNA (tmRNA), required for stable association of tmRNA with ribosomes. tmRNA and SmpB together mimic tRNA shape, replacing the anticodon stem-loop with SmpB. tmRNA is encoded by the ssrA gene; the 2 termini fold to resemble tRNA(Ala) and it encodes a 'tag peptide', a short internal open reading frame. During trans-translation Ala-aminoacylated tmRNA acts like a tRNA, entering the A-site of stalled ribosomes, displacing the stalled mRNA. The ribosome then switches to translate the ORF on the tmRNA; the nascent peptide is terminated with the 'tag peptide' encoded by the tmRNA and targeted for degradation. The ribosome is freed to recommence translation, which seems to be the essential function of trans-translation. The polypeptide is SsrA-binding protein (Coxiella burnetii (strain RSA 331 / Henzerling II)).